A 234-amino-acid polypeptide reads, in one-letter code: Glucosamine-6-phosphate deaminase (234 aa).

D62 (proton acceptor; for enolization step) is an active-site residue. The active-site For ring-opening step is N128. The Proton acceptor; for ring-opening step role is filled by H130. The active-site For ring-opening step is E135.

Belongs to the glucosamine/galactosamine-6-phosphate isomerase family. NagB subfamily.

It carries out the reaction alpha-D-glucosamine 6-phosphate + H2O = beta-D-fructose 6-phosphate + NH4(+). It participates in amino-sugar metabolism; N-acetylneuraminate degradation; D-fructose 6-phosphate from N-acetylneuraminate: step 5/5. Its function is as follows. Catalyzes the reversible isomerization-deamination of glucosamine 6-phosphate (GlcN6P) to form fructose 6-phosphate (Fru6P) and ammonium ion. This is Glucosamine-6-phosphate deaminase from Streptococcus uberis (strain ATCC BAA-854 / 0140J).